The chain runs to 162 residues: NADH-quinone oxidoreductase subunit I (162 aa).

2 4Fe-4S ferredoxin-type domains span residues Leu52–Gly82 and Val93–Asn122. [4Fe-4S] cluster-binding residues include Cys62, Cys65, Cys68, Cys72, Cys102, Cys105, Cys108, and Cys112.

This sequence belongs to the complex I 23 kDa subunit family. In terms of assembly, NDH-1 is composed of 14 different subunits. Subunits NuoA, H, J, K, L, M, N constitute the membrane sector of the complex. Requires [4Fe-4S] cluster as cofactor.

It is found in the cell inner membrane. It catalyses the reaction a quinone + NADH + 5 H(+)(in) = a quinol + NAD(+) + 4 H(+)(out). Its function is as follows. NDH-1 shuttles electrons from NADH, via FMN and iron-sulfur (Fe-S) centers, to quinones in the respiratory chain. The immediate electron acceptor for the enzyme in this species is believed to be ubiquinone. Couples the redox reaction to proton translocation (for every two electrons transferred, four hydrogen ions are translocated across the cytoplasmic membrane), and thus conserves the redox energy in a proton gradient. The sequence is that of NADH-quinone oxidoreductase subunit I from Bradyrhizobium sp. (strain BTAi1 / ATCC BAA-1182).